The following is a 788-amino-acid chain: Auxin response factor 4 (788 aa).

The segment covering 1–19 (MEFDLNTEIAEVEEEENDD) has biased composition (acidic residues). The segment at 1–53 (MEFDLNTEIAEVEEEENDDVGVGVGGGTRIDKGRLGISPSSSSSCSSGSSSSS) is disordered. The span at 38 to 53 (SPSSSSSCSSGSSSSS) shows a compositional bias: low complexity. The TF-B3 DNA-binding region spans 177–279 (FCKTLTASDT…ELRLGIRRAA (103 aa)). Residues 413–433 (LSIQSSPRPKRPWAGLLDTTP) form a disordered region. The 83-residue stretch at 665 to 747 (RICTKVHKQG…VVWKIHLYTK (83 aa)) folds into the PB1 domain.

Belongs to the ARF family. As to quaternary structure, homodimers and heterodimers. Expressed in the whole plant.

It is found in the nucleus. Functionally, auxin response factors (ARFs) are transcriptional factors that bind specifically to the DNA sequence 5'-TGTCTC-3' found in the auxin-responsive promoter elements (AuxREs). Could act as transcriptional activator or repressor. Formation of heterodimers with Aux/IAA proteins may alter their ability to modulate early auxin response genes expression. This chain is Auxin response factor 4 (ARF4), found in Arabidopsis thaliana (Mouse-ear cress).